A 149-amino-acid polypeptide reads, in one-letter code: UPF0260 protein Psyr_1567 (149 aa).

It belongs to the UPF0260 family.

The chain is UPF0260 protein Psyr_1567 from Pseudomonas syringae pv. syringae (strain B728a).